Reading from the N-terminus, the 151-residue chain is 3-dehydroquinate dehydratase (151 aa).

Tyr-24 acts as the Proton acceptor in catalysis. 3 residues coordinate substrate: Asn-76, His-82, and Asp-89. The Proton donor role is filled by His-102. Substrate contacts are provided by residues 103–104 (VS) and Arg-113.

Belongs to the type-II 3-dehydroquinase family. In terms of assembly, homododecamer.

The enzyme catalyses 3-dehydroquinate = 3-dehydroshikimate + H2O. The protein operates within metabolic intermediate biosynthesis; chorismate biosynthesis; chorismate from D-erythrose 4-phosphate and phosphoenolpyruvate: step 3/7. In terms of biological role, catalyzes a trans-dehydration via an enolate intermediate. In Rhodopseudomonas palustris (strain TIE-1), this protein is 3-dehydroquinate dehydratase.